The sequence spans 267 residues: Urease accessory protein UreD (267 aa).

This sequence belongs to the UreD family. In terms of assembly, ureD, UreF and UreG form a complex that acts as a GTP-hydrolysis-dependent molecular chaperone, activating the urease apoprotein by helping to assemble the nickel containing metallocenter of UreC. The UreE protein probably delivers the nickel.

It is found in the cytoplasm. Required for maturation of urease via the functional incorporation of the urease nickel metallocenter. This Synechococcus sp. (strain JA-2-3B'a(2-13)) (Cyanobacteria bacterium Yellowstone B-Prime) protein is Urease accessory protein UreD.